Consider the following 302-residue polypeptide: MQQLLNEILDEVRPLIGRGKVADYIPALAGVEPDQLGIAVYSRDGELFHAGDALRPFSIQSISKVFSLVQAIQHSGEDIWQRLGHEPSGQPFNSLVQLEFERGRPRNPFINAGALVICDINQSRFAAPAQSMRDFVRRLCGNPEVVSDSVVARSEYQHRSRNAAAAYLMKSFGNFHNDVEAVLLSYFHHCALRMSCVDLARAFCFLADKGFCKHSGEQVLNERQTKQVNAIMATSGLYDEAGNFAYRVGLPGKSGVGGGIIAVVPGRFTVCVWSPELNGAGNSLAGIAALEKLSERIGWSIF.

Substrate-binding residues include serine 61, asparagine 111, glutamate 155, asparagine 162, tyrosine 186, tyrosine 238, and valine 256.

The protein belongs to the glutaminase family. Homotetramer.

The enzyme catalyses L-glutamine + H2O = L-glutamate + NH4(+). This chain is Glutaminase, found in Pseudomonas paraeruginosa (strain DSM 24068 / PA7) (Pseudomonas aeruginosa (strain PA7)).